Consider the following 90-residue polypeptide: Small ribosomal subunit protein uS15 (90 aa).

Belongs to the universal ribosomal protein uS15 family. In terms of assembly, part of the 30S ribosomal subunit. Forms a bridge to the 50S subunit in the 70S ribosome, contacting the 23S rRNA.

Its function is as follows. One of the primary rRNA binding proteins, it binds directly to 16S rRNA where it helps nucleate assembly of the platform of the 30S subunit by binding and bridging several RNA helices of the 16S rRNA. In terms of biological role, forms an intersubunit bridge (bridge B4) with the 23S rRNA of the 50S subunit in the ribosome. In Campylobacter jejuni subsp. jejuni serotype O:6 (strain 81116 / NCTC 11828), this protein is Small ribosomal subunit protein uS15.